A 158-amino-acid polypeptide reads, in one-letter code: Cyclic pyranopterin monophosphate synthase (158 aa).

Substrate is bound by residues 74–76 and 112–113; these read MCH and ME. Residue Asp127 is part of the active site.

It belongs to the MoaC family. As to quaternary structure, homohexamer; trimer of dimers.

It catalyses the reaction (8S)-3',8-cyclo-7,8-dihydroguanosine 5'-triphosphate = cyclic pyranopterin phosphate + diphosphate. The protein operates within cofactor biosynthesis; molybdopterin biosynthesis. Functionally, catalyzes the conversion of (8S)-3',8-cyclo-7,8-dihydroguanosine 5'-triphosphate to cyclic pyranopterin monophosphate (cPMP). The sequence is that of Cyclic pyranopterin monophosphate synthase from Helicobacter pylori (strain G27).